The sequence spans 578 residues: Poly(A) RNA polymerase cid13 (578 aa).

Mg(2+) is bound by residues Asp110 and Asp112. Positions 275 to 330 (SLGILFVEFFRFFGYLFDYEHFVLSIRHGTFLSKRAKGWQFQLNNFLCVEEPFHTS) constitute a PAP-associated domain. Residues 495-565 (SHHFDERHGG…SEVVSPVSLH (71 aa)) are disordered. Over residues 496-510 (HHFDERHGGDRHEKN) the composition is skewed to basic and acidic residues. Over residues 516–527 (RYSRNKFHKKKQ) the composition is skewed to basic residues. Low complexity predominate over residues 547-565 (NSPPSNSSSSEVVSPVSLH).

It belongs to the DNA polymerase type-B-like family. In terms of assembly, interacts with pab1. Mg(2+) serves as cofactor. Requires Mn(2+) as cofactor.

It localises to the cytoplasm. The protein localises to the nucleus. The enzyme catalyses RNA(n) + ATP = RNA(n)-3'-adenine ribonucleotide + diphosphate. Polymerase that creates the 3' poly(A) tail of suc22 mRNA. The protein is Poly(A) RNA polymerase cid13 (cid13) of Schizosaccharomyces pombe (strain 972 / ATCC 24843) (Fission yeast).